Here is a 477-residue protein sequence, read N- to C-terminus: Cysteine--tRNA ligase (477 aa).

Cys42 contributes to the Zn(2+) binding site. The 'HIGH' region signature appears at Ala44–His54. The Zn(2+) site is built by Cys220, His245, and Glu249. The short motif at Lys276 to Ser280 is the 'KMSKS' region element. An ATP-binding site is contributed by Lys279.

It belongs to the class-I aminoacyl-tRNA synthetase family. As to quaternary structure, monomer. It depends on Zn(2+) as a cofactor.

It localises to the cytoplasm. It catalyses the reaction tRNA(Cys) + L-cysteine + ATP = L-cysteinyl-tRNA(Cys) + AMP + diphosphate. The protein is Cysteine--tRNA ligase of Mycolicibacterium smegmatis (strain ATCC 700084 / mc(2)155) (Mycobacterium smegmatis).